A 651-amino-acid chain; its full sequence is Zinc metalloproteinase nas-32 (651 aa).

Positions 1-21 (MRRFFICYIGFLSIFLDFILA) are cleaved as a signal peptide. Positions 22–202 (DKDNNSEEER…EQSSKSRRKK (181 aa)) are excised as a propeptide. 3 N-linked (GlcNAc...) asparagine glycosylation sites follow: asparagine 25, asparagine 72, and asparagine 251. Residues 203 to 394 (RQIDNLAQFW…KMLNTHYSCS (192 aa)) form the Peptidase M12A domain. 6 disulfide bridges follow: cysteine 245–cysteine 393, cysteine 264–cysteine 283, cysteine 395–cysteine 412, cysteine 415–cysteine 426, cysteine 434–cysteine 467, and cysteine 495–cysteine 516. Residue histidine 291 coordinates Zn(2+). Glutamate 292 is a catalytic residue. 2 residues coordinate Zn(2+): histidine 295 and histidine 301. In terms of domain architecture, EGF-like spans 380–433 (TFLDLKMLNTHYSCSCPTILSCGNGGFTNPANCSVCICPYGFGGALCTERTDYG). Residue asparagine 411 is glycosylated (N-linked (GlcNAc...) asparagine). Positions 434–554 (CGSTLTATDT…TTYTWSYRYV (121 aa)) constitute a CUB domain. The N-linked (GlcNAc...) asparagine glycan is linked to asparagine 453. The N-linked (GlcNAc...) asparagine glycan is linked to asparagine 557. Disulfide bonds link cysteine 610/cysteine 647, cysteine 619/cysteine 640, and cysteine 628/cysteine 644. Residues 610-647 (CKDRFPKSQCSTYSTNGMCTQQPPLAAEFSCAETCGFC) form the ShKT domain.

It depends on Zn(2+) as a cofactor. Expressed in pharyngeal, anal depressor, intestinal and vulva muscles, head neurons and head mesodermal cell.

It localises to the secreted. Its function is as follows. Metalloprotease. The chain is Zinc metalloproteinase nas-32 (nas-32) from Caenorhabditis elegans.